The primary structure comprises 441 residues: Ribosomal protein uS12 methylthiotransferase RimO (441 aa).

The MTTase N-terminal domain occupies 5-116 (PTIAFTHLGC…IVDVMQRVEK (112 aa)). Residues cysteine 14, cysteine 50, cysteine 79, cysteine 154, cysteine 158, and cysteine 161 each contribute to the [4Fe-4S] cluster site. The region spanning 140-370 (TTSEGVAYVR…EVQQSISWQQ (231 aa)) is the Radical SAM core domain. Residues 372–438 (QKLVGQLVDV…IYDLYGCLIS (67 aa)) enclose the TRAM domain.

This sequence belongs to the methylthiotransferase family. RimO subfamily. It depends on [4Fe-4S] cluster as a cofactor.

It is found in the cytoplasm. It catalyses the reaction L-aspartate(89)-[ribosomal protein uS12]-hydrogen + (sulfur carrier)-SH + AH2 + 2 S-adenosyl-L-methionine = 3-methylsulfanyl-L-aspartate(89)-[ribosomal protein uS12]-hydrogen + (sulfur carrier)-H + 5'-deoxyadenosine + L-methionine + A + S-adenosyl-L-homocysteine + 2 H(+). Functionally, catalyzes the methylthiolation of an aspartic acid residue of ribosomal protein uS12. The sequence is that of Ribosomal protein uS12 methylthiotransferase RimO from Trichodesmium erythraeum (strain IMS101).